The chain runs to 396 residues: Elongation factor Tu (396 aa).

The region spanning 10-206 is the tr-type G domain; it reads KPHVNVGTIG…ALDTYIPLPE (197 aa). The interval 19–26 is G1; that stretch reads GHVDHGKT. Residue 19–26 participates in GTP binding; it reads GHVDHGKT. Threonine 26 is a Mg(2+) binding site. Residues 60 to 64 are G2; the sequence is GITIN. The tract at residues 81 to 84 is G3; it reads DCPG. GTP is bound by residues 81 to 85 and 136 to 139; these read DCPGH and NKCD. The interval 136–139 is G4; that stretch reads NKCD. Positions 174–176 are G5; it reads SAK.

It belongs to the TRAFAC class translation factor GTPase superfamily. Classic translation factor GTPase family. EF-Tu/EF-1A subfamily. In terms of assembly, monomer.

Its subcellular location is the cytoplasm. The catalysed reaction is GTP + H2O = GDP + phosphate + H(+). Its function is as follows. GTP hydrolase that promotes the GTP-dependent binding of aminoacyl-tRNA to the A-site of ribosomes during protein biosynthesis. In Polaromonas sp. (strain JS666 / ATCC BAA-500), this protein is Elongation factor Tu.